Here is a 1107-residue protein sequence, read N- to C-terminus: Miniconductance mechanosensitive channel MscM (1107 aa).

The first 19 residues, 1 to 19 (MRLIITFLMAWCLSWGAYA), serve as a signal peptide directing secretion. A run of 11 helical transmembrane segments spans residues 467-487 (VMML…ILVG), 522-542 (LFWS…LGYG), 551-571 (LAVA…VVMI), 600-620 (YLMS…FDNL), 628-648 (SLGR…TLSL), 674-694 (MMIG…LATA), 698-718 (LARL…YHVI), 785-805 (ILML…HSAF), 828-848 (PITL…TQLV), 875-895 (TITK…MIGI), and 910-930 (GLGF…IILF).

The protein belongs to the MscS (TC 1.A.23) family. In terms of assembly, homoheptamer.

It localises to the cell inner membrane. Its function is as follows. Mechanosensitive channel that protects cells against hypoosmotic stress when highly overexpressed. Gates spontaneously in response to increased membrane tension. This Escherichia coli (strain K12) protein is Miniconductance mechanosensitive channel MscM (mscM).